Consider the following 351-residue polypeptide: MSRAPRTARAELPKGAQARHVPVLLAEVLAALSLDRPGLAVDGTFGAGGYTRALLEAGPEVRVIAIDRDPTAIRGGADLVTASGGRLRLVQGRFGDLDTLIADQDEPQADWVVLDIGVSSMQIDEAQRGFSFRQDGPLDMRMGGEGPSAADLVNGEEETTLADILYHFGEERRSRAVARAIVEARRRAPIETTAQLADLVAGVVRPEPGSPIHPATRSFQGLRIAVNDELGELVRGLHAAERVLKPGGRLAVVTFHSLEDRIVKQFFSARSGRAAQASRHVPGVERPAPKSFKLVTKGPVLPSEAETDVNPRSRSAKLRAGERTDAPAPPPLSAIETLASLPAPQGRGPRR.

Residues 48 to 50 (GGY), aspartate 67, phenylalanine 94, aspartate 115, and glutamine 122 contribute to the S-adenosyl-L-methionine site. Residues 274–351 (AAQASRHVPG…PAPQGRGPRR (78 aa)) form a disordered region.

It belongs to the methyltransferase superfamily. RsmH family.

It localises to the cytoplasm. The catalysed reaction is cytidine(1402) in 16S rRNA + S-adenosyl-L-methionine = N(4)-methylcytidine(1402) in 16S rRNA + S-adenosyl-L-homocysteine + H(+). Functionally, specifically methylates the N4 position of cytidine in position 1402 (C1402) of 16S rRNA. The sequence is that of Ribosomal RNA small subunit methyltransferase H from Methylorubrum extorquens (strain PA1) (Methylobacterium extorquens).